A 145-amino-acid polypeptide reads, in one-letter code: NADH-quinone oxidoreductase subunit A (145 aa).

3 helical membrane passes run 14-34 (FAVFLLSALGLCVFMLTGGFL), 66-86 (FYLVAMFFVIFDVETLYLYAW), and 96-116 (VGFIEATIFILILLAGLVYLV).

It belongs to the complex I subunit 3 family. In terms of assembly, NDH-1 is composed of 13 different subunits. Subunits NuoA, H, J, K, L, M, N constitute the membrane sector of the complex.

It localises to the cell inner membrane. It catalyses the reaction a quinone + NADH + 5 H(+)(in) = a quinol + NAD(+) + 4 H(+)(out). Its function is as follows. NDH-1 shuttles electrons from NADH, via FMN and iron-sulfur (Fe-S) centers, to quinones in the respiratory chain. The immediate electron acceptor for the enzyme in this species is believed to be ubiquinone. Couples the redox reaction to proton translocation (for every two electrons transferred, four hydrogen ions are translocated across the cytoplasmic membrane), and thus conserves the redox energy in a proton gradient. The polypeptide is NADH-quinone oxidoreductase subunit A (Sodalis glossinidius (strain morsitans)).